A 193-amino-acid polypeptide reads, in one-letter code: DNA dC-&gt;dU-editing enzyme APOBEC-3H (193 aa).

Residues 24 to 126 (YRRKTYLCYQ…WKYQQGLRHL (103 aa)) form the CMP/dCMP-type deaminase domain. His-54 contributes to the Zn(2+) binding site. Glu-56 serves as the catalytic Proton donor. The Zn(2+) site is built by Cys-85 and Cys-88.

This sequence belongs to the cytidine and deoxycytidylate deaminase family. As to quaternary structure, homodimer. Zn(2+) is required as a cofactor. As to expression, expressed in peripheral blood mononuclear cells.

It localises to the cytoplasm. It catalyses the reaction a 2'-deoxycytidine in single-stranded DNA + H2O + H(+) = a 2'-deoxyuridine in single-stranded DNA + NH4(+). Functionally, DNA deaminase (cytidine deaminase) which acts as an inhibitor of retrovirus replication and retrotransposon mobility via deaminase-dependent and -independent mechanisms. Selectively targets single-stranded DNA and does not deaminate double-stranded DNA or single- or double-stranded RNA. Exhibits single-stranded DNA deaminase activity (in vitro). Incorporates into the released virions of the virion infectivity factor (vif)-deficient feline immunodeficiency virus (FIV) and suppresses FIV infectivity, probably in a deaminase-dependent manner (in vitro). Induces G-to-A hypermutations in vif-deficient FIV (in vitro). The APOBEC3H/APOBEC3Z3 haplotype 5 exhibits antiviral activity against vif-proficient FIV, strains Petaluma, C36 and Shizuoka (in vitro). Does not exhibit inhibitory activity against feline leukemia virus (FeLV), feline endogenous retrovirus (RD-114 virus) or a long interspersed nuclear element-1 (LINE-1) retrotransposon (in vitro). This Felis catus (Cat) protein is DNA dC-&gt;dU-editing enzyme APOBEC-3H.